The primary structure comprises 243 residues: Uridylate kinase (243 aa).

Position 15–18 (K15–G18) interacts with ATP. Residues G23–G28 are involved in allosteric activation by GTP. G57 lines the UMP pocket. ATP contacts are provided by G58 and R62. Residues D77 and T138–T145 each bind UMP. ATP is bound by residues T165, F171, and D174.

Belongs to the UMP kinase family. As to quaternary structure, homohexamer.

The protein resides in the cytoplasm. It carries out the reaction UMP + ATP = UDP + ADP. Its pathway is pyrimidine metabolism; CTP biosynthesis via de novo pathway; UDP from UMP (UMPK route): step 1/1. With respect to regulation, allosterically activated by GTP. Inhibited by UTP. Catalyzes the reversible phosphorylation of UMP to UDP. This chain is Uridylate kinase, found in Vibrio campbellii (strain ATCC BAA-1116).